The chain runs to 113 residues: Ribulose bisphosphate carboxylase small subunit (113 aa).

This sequence belongs to the RuBisCO small chain family. In terms of assembly, heterohexadecamer of 8 large and 8 small subunits. Forms a CsoS2-CsoS1-RuBisCO complex.

It is found in the carboxysome. Its function is as follows. RuBisCO catalyzes two reactions: the carboxylation of D-ribulose 1,5-bisphosphate, the primary event in carbon dioxide fixation, as well as the oxidative fragmentation of the pentose substrate in the photorespiration process. Both reactions occur simultaneously and in competition at the same active site. Although the small subunit is not catalytic it is essential for maximal activity. In Prochlorococcus marinus (strain MIT 9313), this protein is Ribulose bisphosphate carboxylase small subunit.